The sequence spans 469 residues: Cytoplasmic tRNA 2-thiolation protein 2 (469 aa).

Belongs to the CTU2/NCS2 family.

The protein resides in the cytoplasm. Its pathway is tRNA modification; 5-methoxycarbonylmethyl-2-thiouridine-tRNA biosynthesis. In terms of biological role, plays a central role in 2-thiolation of mcm(5)S(2)U at tRNA wobble positions of tRNA(Lys), tRNA(Glu) and tRNA(Gln). May act by forming a heterodimer with NCS6 that ligates sulfur from thiocarboxylated URM1 onto the uridine of tRNAs at wobble position. Prior mcm(5) tRNA modification by the elongator complex is required for 2-thiolation. May also be involved in protein urmylation. In Candida glabrata (strain ATCC 2001 / BCRC 20586 / JCM 3761 / NBRC 0622 / NRRL Y-65 / CBS 138) (Yeast), this protein is Cytoplasmic tRNA 2-thiolation protein 2.